The primary structure comprises 430 residues: tRNA(Ile)-lysidine synthase (430 aa).

ATP is bound at residue 21–26 (SGGLDS).

This sequence belongs to the tRNA(Ile)-lysidine synthase family.

The protein resides in the cytoplasm. The catalysed reaction is cytidine(34) in tRNA(Ile2) + L-lysine + ATP = lysidine(34) in tRNA(Ile2) + AMP + diphosphate + H(+). Its function is as follows. Ligates lysine onto the cytidine present at position 34 of the AUA codon-specific tRNA(Ile) that contains the anticodon CAU, in an ATP-dependent manner. Cytidine is converted to lysidine, thus changing the amino acid specificity of the tRNA from methionine to isoleucine. The sequence is that of tRNA(Ile)-lysidine synthase from Salmonella choleraesuis (strain SC-B67).